The sequence spans 521 residues: Cytokinin dehydrogenase 9 (521 aa).

An N-terminal signal peptide occupies residues 1–22 (MRPSLLQYLKLLLLLALGGVTT). An N-linked (GlcNAc...) asparagine glycan is attached at N57. The FAD-binding PCMH-type domain occupies 59 to 237 (SSFPPVAVLH…TRARIPLEPA (179 aa)). A95, G97, and G99 together coordinate FAD. H100 carries the post-translational modification Pros-8alpha-FAD histidine. Positions 101, 105, 161, 166, 172, 176, and 227 each coordinate FAD. N278, N412, and N418 each carry an N-linked (GlcNAc...) asparagine glycan. Position 469 (Y469) interacts with FAD. The N-linked (GlcNAc...) asparagine glycan is linked to N472. Q507 serves as a coordination point for FAD.

Belongs to the oxygen-dependent FAD-linked oxidoreductase family. As to quaternary structure, monomer. The cofactor is FAD. Expressed in inflorescence meristems.

It localises to the secreted. Its subcellular location is the extracellular space. It is found in the cytoplasm. The protein resides in the cytosol. The protein localises to the nucleus. It carries out the reaction N(6)-dimethylallyladenine + A + H2O = 3-methyl-2-butenal + adenine + AH2. Catalyzes the oxidation of cytokinins, a family of N(6)-substituted adenine derivatives that are plant hormones, where the substituent is an isopentenyl group. Possesses cytokinin oxidase activity toward trans-zeatin (tZ) and N6-(2-isopentenyl)adenine (2iP) in vitro. Functions as a primary strigolactone-responsive gene to regulate rice tillering, plant height, and panicle size, likely via a secondary response gene, RR5, which encodes a cytokinin-inducible rice type-A response regulator that seems to act as negative regulator of the cytokinin signaling. The protein is Cytokinin dehydrogenase 9 of Oryza sativa subsp. japonica (Rice).